The chain runs to 126 residues: Large ribosomal subunit protein bL12 (126 aa).

It belongs to the bacterial ribosomal protein bL12 family. Homodimer. Part of the ribosomal stalk of the 50S ribosomal subunit. Forms a multimeric L10(L12)X complex, where L10 forms an elongated spine to which 2 to 4 L12 dimers bind in a sequential fashion. Binds GTP-bound translation factors.

Forms part of the ribosomal stalk which helps the ribosome interact with GTP-bound translation factors. Is thus essential for accurate translation. The chain is Large ribosomal subunit protein bL12 from Koribacter versatilis (strain Ellin345).